Here is a 421-residue protein sequence, read N- to C-terminus: MKQSVLRFLADLRFAISILLIIASCSVIGTVIEQDQSIEIYKLNYPLTNRIFGFLSWDIILKFGLDHVYKTWWFLGFIALFGLSLFTCTILQQFPSLKIARRCQFFRTTQQFGLLKLSRNLGNLSLSQLLFRIKKNQYSIFQQKNIVYCYKGLIGRIAPIIVHFSMILILIGAIFGALNGFKAQELIPKTEAFHVQNILSNGQLTRIPKVVSRVNDFWITYTKQATVAQFYSDVSILNTEGNEIVRKTIFVNSPIKYNNIDFYQTDWNVIGLRVQNDTSSILQYPLINLTNAGNKVWVTWIPSDSEFKKGLTILVDNLQGYCSIYDESGIFVGNLELNETFNLNMPITLVDILSSTGLQIKTDPGILLIYTGFLFLMLSTLISYITYSQIWIIQTNRQIFVGGNTTRATFDFEIEFLKLIK.

3 helical membrane-spanning segments follow: residues 12 to 32, 71 to 91, and 157 to 177; these read LRFAISILLIIASCSVIGTVI, TWWFLGFIALFGLSLFTCTIL, and IAPIIVHFSMILILIGAIFGA.

The protein belongs to the Ccs1/CcsB family. As to quaternary structure, may interact with CcsA.

It localises to the plastid. Its subcellular location is the chloroplast thylakoid membrane. Functionally, required during biogenesis of c-type cytochromes (cytochrome c6 and cytochrome f) at the step of heme attachment. The polypeptide is Cytochrome c biogenesis protein Ccs1 (Trieres chinensis (Marine centric diatom)).